The chain runs to 1928 residues: Myosin-1 (1928 aa).

In terms of domain architecture, Myosin N-terminal SH3-like spans 8 to 71 (SSNMIVWIPD…RISDVFPVNP (64 aa)). A Myosin motor domain is found at 75 to 791 (DKVENMSELT…VLADLEKQKD (717 aa)). Residue 180–187 (GESGAGKT) coordinates ATP. The actin-binding stretch occupies residues 460-529 (IGLLDIAGFE…LQLTIDLIES (70 aa)). The span at 629 to 641 (SSSAGVEANISNQ) shows a compositional bias: polar residues. Residues 629-657 (SSSAGVEANISNQEVKKSARTSTFKTTSS) are disordered. The 30-residue stretch at 794–823 (LNNIMIKLTATIRGYTVRKEITYHLQKLKK) folds into the IQ domain. Positions 856-1911 (SSNDMTRTKK…FWKSRYESTM (1056 aa)) form a coiled coil.

This sequence belongs to the TRAFAC class myosin-kinesin ATPase superfamily. Myosin family.

Its function is as follows. Required for cell division. This Saccharomyces cerevisiae (strain ATCC 204508 / S288c) (Baker's yeast) protein is Myosin-1 (MYO1).